Here is an 889-residue protein sequence, read N- to C-terminus: 97 kDa heat shock protein (889 aa).

2 disordered regions span residues 504–622 (EDAM…ATTD) and 812–889 (FVCD…MELD). A compositionally biased stretch (basic and acidic residues) spans 549-585 (SADKEEQADNGSKETSKDSKDQTSESSKSDKESKDQN). Positions 586-597 (SEGSKSDNSSTE) are enriched in polar residues. Residues 869–889 (ASKEGETKPDETKPDVEMELD) show a composition bias toward basic and acidic residues.

This sequence belongs to the heat shock protein 70 family.

Functionally, cell surface recognition protein that binds acrosome-reacted sperm and thereby mediates binding and subsequent fusion of the sperm and egg. The chain is 97 kDa heat shock protein from Strongylocentrotus purpuratus (Purple sea urchin).